A 303-amino-acid polypeptide reads, in one-letter code: Porphobilinogen deaminase (303 aa).

Position 241 is an S-(dipyrrolylmethanemethyl)cysteine (Cys-241).

Belongs to the HMBS family. As to quaternary structure, monomer. It depends on dipyrromethane as a cofactor.

The enzyme catalyses 4 porphobilinogen + H2O = hydroxymethylbilane + 4 NH4(+). The protein operates within porphyrin-containing compound metabolism; protoporphyrin-IX biosynthesis; coproporphyrinogen-III from 5-aminolevulinate: step 2/4. It participates in porphyrin-containing compound metabolism; chlorophyll biosynthesis. Tetrapolymerization of the monopyrrole PBG into the hydroxymethylbilane pre-uroporphyrinogen in several discrete steps. The chain is Porphobilinogen deaminase from Roseiflexus castenholzii (strain DSM 13941 / HLO8).